Here is a 327-residue protein sequence, read N- to C-terminus: Sideroflexin FSF1 (327 aa).

N-acetylalanine is present on A2. A run of 4 helical transmembrane segments spans residues 98 to 118 (NLVV…TVFW), 143 to 163 (SQLL…ALGL), 179 to 199 (LILG…VNVF), and 272 to 292 (ANLG…LGIF).

Belongs to the sideroflexin family.

Its subcellular location is the mitochondrion membrane. Its function is as follows. Mitochondrial amino-acid transporter that mediates transport of serine into mitochondria. The chain is Sideroflexin FSF1 from Saccharomyces cerevisiae (strain ATCC 204508 / S288c) (Baker's yeast).